Here is a 383-residue protein sequence, read N- to C-terminus: Cell division protein FtsZ (383 aa).

GTP contacts are provided by residues 20-24, 107-109, glutamate 138, arginine 142, and asparagine 186; these read GGGGN and GTG.

This sequence belongs to the FtsZ family. As to quaternary structure, homodimer. Polymerizes to form a dynamic ring structure in a strictly GTP-dependent manner. Interacts directly with several other division proteins.

It localises to the cytoplasm. Its function is as follows. Essential cell division protein that forms a contractile ring structure (Z ring) at the future cell division site. The regulation of the ring assembly controls the timing and the location of cell division. One of the functions of the FtsZ ring is to recruit other cell division proteins to the septum to produce a new cell wall between the dividing cells. Binds GTP and shows GTPase activity. The sequence is that of Cell division protein FtsZ from Escherichia coli O157:H7.